The chain runs to 336 residues: Cytoskeleton protein RodZ (336 aa).

Residues 1–111 are Cytoplasmic-facing; the sequence is MNTEATHDQN…LGKRRKKRDG (111 aa). One can recognise an HTH cro/C1-type domain in the interval 19 to 71; that stretch reads LRNAREQLGLSQQAVAERLCLKVSTVRDIEEDKAPSDLASTFLRGYIRSYARL. The segment at residues 30–49 is a DNA-binding region (H-T-H motif); sequence QQAVAERLCLKVSTVRDIEE. Residues 112-132 traverse the membrane as a helical; Signal-anchor for type II membrane protein segment; sequence WLMSFTWLVLFVVVGLTGAWW. Over 133–336 the chain is Periplasmic; it reads WQNHKAQQEE…TLNAEPTPAQ (204 aa). A disordered region spans residues 155-243; that stretch reads NADKDSGQSV…PSALPTSQAG (89 aa). The segment covering 161–175 has biased composition (polar residues); sequence GQSVPLDTGAVTSQD. Composition is skewed to low complexity over residues 176–214 and 221–243; these read TTPAQTAPAPATPVDSTAATQTQTPAPTAAATQNTVVAP and TAATSAAPAATETPSALPTSQAG.

The protein belongs to the RodZ family.

It is found in the cell inner membrane. Cytoskeletal protein that is involved in cell-shape control through regulation of the length of the long axis. This is Cytoskeleton protein RodZ from Salmonella newport (strain SL254).